The following is a 366-amino-acid chain: Probable protein arginine N-methyltransferase 1.2 (366 aa).

An SAM-dependent MTase PRMT-type domain is found at 45-347 (ADYYFDSYSH…NPRDVDIKLS (303 aa)). Catalysis depends on residues glutamate 157 and glutamate 166.

The protein belongs to the class I-like SAM-binding methyltransferase superfamily. Protein arginine N-methyltransferase family. Interacts with FIB2 and PRMT11.

It localises to the nucleus. It is found in the cytoplasm. Methylates (mono and asymmetric dimethylation) the guanidino nitrogens of arginyl residues present in a glycine and arginine-rich domain. Type I arginine methyltransferase active on both histones and non-histone proteins. Mediates the methylation of MED36A. The protein is Probable protein arginine N-methyltransferase 1.2 (PRMT12) of Arabidopsis thaliana (Mouse-ear cress).